We begin with the raw amino-acid sequence, 573 residues long: Proline--tRNA ligase (573 aa).

This sequence belongs to the class-II aminoacyl-tRNA synthetase family. ProS type 1 subfamily. Homodimer.

The protein resides in the cytoplasm. The catalysed reaction is tRNA(Pro) + L-proline + ATP = L-prolyl-tRNA(Pro) + AMP + diphosphate. In terms of biological role, catalyzes the attachment of proline to tRNA(Pro) in a two-step reaction: proline is first activated by ATP to form Pro-AMP and then transferred to the acceptor end of tRNA(Pro). As ProRS can inadvertently accommodate and process non-cognate amino acids such as alanine and cysteine, to avoid such errors it has two additional distinct editing activities against alanine. One activity is designated as 'pretransfer' editing and involves the tRNA(Pro)-independent hydrolysis of activated Ala-AMP. The other activity is designated 'posttransfer' editing and involves deacylation of mischarged Ala-tRNA(Pro). The misacylated Cys-tRNA(Pro) is not edited by ProRS. The chain is Proline--tRNA ligase from Caldanaerobacter subterraneus subsp. tengcongensis (strain DSM 15242 / JCM 11007 / NBRC 100824 / MB4) (Thermoanaerobacter tengcongensis).